Consider the following 601-residue polypeptide: MMGALQQQSNGHGHGVLLLAEAGYAEVDPTGRYGRFNEILGKGSSKIVYRGFDEWRGVEVAWNQVRLRDVVRGGGELERFYGEVHLLAALRHRGIVRLHAYWVDAPRRALNFVTELFVSGTLRQYRERHRRVSAAAVRRWCAQILDGLAYLHAHSPPIIHRDLKCDNIFVNGNQGEVKIGDLGLAAFRRGGGHARCVGTPEFMAPEVYDESYDELADVYSFGMCVLEMVTLDYPYSECSNPIQIYKRVISGIKPAALYRVSDPVVRQFIERCLAPAARRPAARELLDDPFLLPLEDDGFFSGDGGDGHGGFGVGYYNLMYNYLHQPACIDDHHACSNGGLSPSNSVGDNDVDAAVQRGDDDGDNWLRDIHMLFDEDDDDAAAADANERVGGVDITIKGRRTDDGGVYLGLRIADKNGTGRGRIICFRFDTEADTAMTVAAEMVAELDITDHEVTRIAQLIDGKVAALVPGWRPGPATDDDDDDDLVGGGDDPDAPGGAAAACCKNCRPAASSSSSCGSLVDFMSSAAAAERHGCRRCAELHGRFEEITFQADDDEEEQHLQGSSSDTGGSNHEQHAMGKDKEVMNINGIAQDGTVQGSEQP.

In terms of domain architecture, Protein kinase spans 34 to 291 (GRFNEILGKG…ARELLDDPFL (258 aa)). ATP contacts are provided by residues 114–117 (TELF) and Lys164. The active-site Proton acceptor is the Asp181. Disordered regions lie at residues 470–498 (GWRP…PGGA) and 551–601 (ADDD…SEQP). Over residues 477-493 (TDDDDDDDLVGGGDDPD) the composition is skewed to acidic residues. Over residues 560–571 (LQGSSSDTGGSN) the composition is skewed to polar residues. A compositionally biased stretch (basic and acidic residues) spans 572–583 (HEQHAMGKDKEV).

Belongs to the protein kinase superfamily. Ser/Thr protein kinase family. WNK subfamily.

The enzyme catalyses L-seryl-[protein] + ATP = O-phospho-L-seryl-[protein] + ADP + H(+). It carries out the reaction L-threonyl-[protein] + ATP = O-phospho-L-threonyl-[protein] + ADP + H(+). The protein is Probable serine/threonine-protein kinase WNK3 (WNK3) of Oryza sativa subsp. japonica (Rice).